The chain runs to 318 residues: Phosphatidylglycerol--prolipoprotein diacylglyceryl transferase (318 aa).

The next 7 membrane-spanning stretches (helical) occupy residues 23–43 (PLTIRFYALCILAGIVIGAWL), 59–79 (MDIIMWAVPFGIVGGRLYHVI), 98–118 (IWEGGLGIWGAVAVGLAGAAI), 124–146 (GVRLATFADAAAPGLLLAQAMGR), 192–212 (FQPTFLYESLWCLAAAALLVF), 219–239 (LGAGSVFALYVVLYTAGRFIF), and 253–273 (LRVNTWVSALLFLAALAVFLI). Residue Arg146 coordinates a 1,2-diacyl-sn-glycero-3-phospho-(1'-sn-glycerol). Residues 293–312 (FDTRANGHDPEKHDETDGKG) show a composition bias toward basic and acidic residues. The interval 293–318 (FDTRANGHDPEKHDETDGKGNRHHVP) is disordered.

Belongs to the Lgt family.

It localises to the cell membrane. The enzyme catalyses L-cysteinyl-[prolipoprotein] + a 1,2-diacyl-sn-glycero-3-phospho-(1'-sn-glycerol) = an S-1,2-diacyl-sn-glyceryl-L-cysteinyl-[prolipoprotein] + sn-glycerol 1-phosphate + H(+). Its pathway is protein modification; lipoprotein biosynthesis (diacylglyceryl transfer). In terms of biological role, catalyzes the transfer of the diacylglyceryl group from phosphatidylglycerol to the sulfhydryl group of the N-terminal cysteine of a prolipoprotein, the first step in the formation of mature lipoproteins. This is Phosphatidylglycerol--prolipoprotein diacylglyceryl transferase from Paenarthrobacter aurescens (strain TC1).